The following is a 244-amino-acid chain: Probable transcriptional regulatory protein Dgeo_2194 (244 aa).

The disordered stretch occupies residues M1–R21.

It belongs to the TACO1 family.

It is found in the cytoplasm. In Deinococcus geothermalis (strain DSM 11300 / CIP 105573 / AG-3a), this protein is Probable transcriptional regulatory protein Dgeo_2194.